The following is a 460-amino-acid chain: Ufm1-specific protease 2 (460 aa).

Catalysis depends on residues Cys-293, Asp-417, and His-419.

The protein belongs to the peptidase C78 family.

The protein resides in the endoplasmic reticulum. Its subcellular location is the cytoplasm. It localises to the nucleus. Functionally, thiol-dependent isopeptidase that specifically cleaves UFM1, a ubiquitin-like modifier protein, from conjugated proteins. While it is also able to mediate the processing of UFM1 precursors, a prerequisite for conjugation reactions, UFSP2 mainly acts as a protein deUFMylase that mediates deconjugation of UFM1 from target proteins. The sequence is that of Ufm1-specific protease 2 from Gallus gallus (Chicken).